The chain runs to 63 residues: Large ribosomal subunit protein uL30 (63 aa).

Belongs to the universal ribosomal protein uL30 family. As to quaternary structure, part of the 50S ribosomal subunit.

In Natranaerobius thermophilus (strain ATCC BAA-1301 / DSM 18059 / JW/NM-WN-LF), this protein is Large ribosomal subunit protein uL30.